The following is a 54-amino-acid chain: Large ribosomal subunit protein bL33A (54 aa).

This sequence belongs to the bacterial ribosomal protein bL33 family.

The protein is Large ribosomal subunit protein bL33A of Mycolicibacterium paratuberculosis (strain ATCC BAA-968 / K-10) (Mycobacterium paratuberculosis).